The following is a 279-amino-acid chain: Large ribosomal subunit protein uL2 (279 aa).

Positions 227–279 are disordered; the sequence is GVAMNPVDHPMGGGEGKTSGGRHPVSPWGFPTKGKKTRDPNKLSSKFIKSKKR.

The protein belongs to the universal ribosomal protein uL2 family. Part of the 50S ribosomal subunit. Forms a bridge to the 30S subunit in the 70S ribosome.

One of the primary rRNA binding proteins. Required for association of the 30S and 50S subunits to form the 70S ribosome, for tRNA binding and peptide bond formation. It has been suggested to have peptidyltransferase activity; this is somewhat controversial. Makes several contacts with the 16S rRNA in the 70S ribosome. This chain is Large ribosomal subunit protein uL2, found in Neorickettsia sennetsu (strain ATCC VR-367 / Miyayama) (Ehrlichia sennetsu).